A 317-amino-acid chain; its full sequence is Putative S-adenosyl-L-methionine-dependent methyltransferase MSMEG_0093 (317 aa).

Residues Asp134 and Asp163 to Leu164 each bind S-adenosyl-L-methionine.

Belongs to the UPF0677 family.

In terms of biological role, exhibits S-adenosyl-L-methionine-dependent methyltransferase activity. The sequence is that of Putative S-adenosyl-L-methionine-dependent methyltransferase MSMEG_0093 from Mycolicibacterium smegmatis (strain ATCC 700084 / mc(2)155) (Mycobacterium smegmatis).